A 150-amino-acid chain; its full sequence is 3-dehydroquinate dehydratase (150 aa).

Tyr-26 serves as the catalytic Proton acceptor. Positions 75, 81, and 88 each coordinate substrate. The active-site Proton donor is His-101. Substrate-binding positions include 102–103 (LS) and Arg-112.

The protein belongs to the type-II 3-dehydroquinase family. In terms of assembly, homododecamer.

It catalyses the reaction 3-dehydroquinate = 3-dehydroshikimate + H2O. It functions in the pathway metabolic intermediate biosynthesis; chorismate biosynthesis; chorismate from D-erythrose 4-phosphate and phosphoenolpyruvate: step 3/7. Catalyzes a trans-dehydration via an enolate intermediate. The protein is 3-dehydroquinate dehydratase of Shewanella loihica (strain ATCC BAA-1088 / PV-4).